The chain runs to 698 residues: Polyribonucleotide nucleotidyltransferase (698 aa).

Positions 490 and 496 each coordinate Mg(2+). The 60-residue stretch at 558–617 (PVIYTMRIPQDKIGALIGPGGKNIKRITETTDTKIDINDDGVVQIAAVNGDKLAMAKAEI) folds into the KH domain. An S1 motif domain is found at 627–695 (NKIYKGKVVS…NNGKVRLSRK (69 aa)).

Belongs to the polyribonucleotide nucleotidyltransferase family. The cofactor is Mg(2+).

Its subcellular location is the cytoplasm. The enzyme catalyses RNA(n+1) + phosphate = RNA(n) + a ribonucleoside 5'-diphosphate. Its function is as follows. Involved in mRNA degradation. Catalyzes the phosphorolysis of single-stranded polyribonucleotides processively in the 3'- to 5'-direction. The sequence is that of Polyribonucleotide nucleotidyltransferase from Elusimicrobium minutum (strain Pei191).